The sequence spans 146 residues: Mitochondrial DnaJ homolog 2 (146 aa).

In terms of domain architecture, J spans 85-146 (EALLILDISA…LERSVLLRKR (62 aa)).

As to quaternary structure, interacts with PAM16/TIM16 and is recruited by the PAM complex.

The protein resides in the mitochondrion inner membrane. Its function is as follows. Plays a role in mitochondrial biogenesis and protein folding. Participates in the translocation of transit peptide-containing proteins from the inner membrane into the mitochondrial matrix in an ATP-dependent manner, probably by stimulating activity of mtHSP70 (SSC1). This Saccharomyces cerevisiae (strain ATCC 204508 / S288c) (Baker's yeast) protein is Mitochondrial DnaJ homolog 2 (MDJ2).